The primary structure comprises 633 residues: Beta-myrcene synthase TPS15CT (633 aa).

The transit peptide at 1–55 directs the protein to the chloroplast; sequence MHCMAVHQFSPSIVSSLPTISTYNNNHFCRFFTPKTSISPISKTKSKSSTCYPIQ. 5 residues coordinate (2E)-geranyl diphosphate: Arg-344, Asp-381, Asp-385, Arg-525, and Asp-528. Residues Asp-381 and Asp-385 each contribute to the Mg(2+) site. The DDXXD motif signature appears at 381 to 385; the sequence is DDIYD. Mg(2+) contacts are provided by Asp-528, Thr-532, and Glu-536.

It belongs to the terpene synthase family. Tpsb subfamily. The cofactor is Mg(2+). Mn(2+) serves as cofactor.

It localises to the plastid. The protein localises to the chloroplast. It catalyses the reaction (2E)-geranyl diphosphate = beta-myrcene + diphosphate. The protein operates within secondary metabolite biosynthesis; terpenoid biosynthesis. Its function is as follows. Involved in monoterpene (C10) olefins biosynthesis, constituants of cannabinoids and terpenoids-rich resins. Catalyzes strictly the conversion of (2E)-geranyl diphosphate to beta-myrcene. In Cannabis sativa (Hemp), this protein is Beta-myrcene synthase TPS15CT.